Consider the following 500-residue polypeptide: Dipeptide and tripeptide permease A (500 aa).

Over 1–21 (MSTANQKPTESVSLNAFKQPK) the chain is Cytoplasmic. Residues 22–44 (AFYLIFSIELWERFGYYGLQGIM) traverse the membrane as a helical segment. The Periplasmic segment spans residues 45–59 (AVYLVKQLGMSEADS). Residues 60–80 (ITLFSSFSALVYGLVAIGGWL) form a helical membrane-spanning segment. Topologically, residues 81–89 (GDKVLGTKR) are cytoplasmic. The chain crosses the membrane as a helical span at residues 90–110 (VIMLGAIVLAIGYALVAWSGH). Residue Asp-111 is a topological domain, periplasmic. A helical transmembrane segment spans residues 112 to 132 (AGIVYMGMAAIAVGNGLFKAN). Residues 133-153 (PSSLLSTCYEKNDPRLDGAFT) are Cytoplasmic-facing. A helical membrane pass occupies residues 154–174 (MYYMSVNIGSFFSMIATPWLA). Residues 175–178 (AKYG) lie on the Periplasmic side of the membrane. Residues 179-199 (WSVAFALSVVGLLITIVNFAF) form a helical membrane-spanning segment. At 200-219 (CQRWVKQYGSKPDFEPINYR) the chain is on the cytoplasmic side. A helical transmembrane segment spans residues 220-240 (NLLLTIIGVVALIAIATWLLH). The Periplasmic portion of the chain corresponds to 241-246 (NQEVAR). The chain crosses the membrane as a helical span at residues 247–267 (MALGVVAFGIVVIFGKEAFAM). Over 268–274 (KGAARRK) the chain is Cytoplasmic. The chain crosses the membrane as a helical span at residues 275-295 (MIVAFILMLEAIIFFVLYSQM). Over 296–320 (PTSLNFFAIRNVEHSILGLAVEPEQ) the chain is Periplasmic. Residues 321-341 (YQALNPFWIIIGSPILAAIYN) traverse the membrane as a helical segment. At 342–352 (KMGDTLPMPTK) the chain is on the cytoplasmic side. A helical transmembrane segment spans residues 353 to 373 (FAIGMVMCSGAFLILPLGAKF). The Periplasmic portion of the chain corresponds to 374-378 (ASDAG). A helical transmembrane segment spans residues 379-399 (IVSVSWLVASYGLQSIGELMI). The Cytoplasmic segment spans residues 400–414 (SGLGLAMVAQLVPQR). The helical transmembrane segment at 415–435 (LMGFIMGSWFLTTAGANLIGG) threads the bilayer. Topologically, residues 436-459 (YVAGMMAVPDNVTDPLMSLEVYGR) are periplasmic. Residues 460-480 (VFLQIGVATAVIAVLMLLTAP) traverse the membrane as a helical segment. At 481-500 (KLHRMTQDDAADKAAKAAVA) the chain is on the cytoplasmic side.

It belongs to the major facilitator superfamily. Proton-dependent oligopeptide transporter (POT/PTR) (TC 2.A.17) family. DtpA subfamily. As to quaternary structure, monomer. Has a crown-like structure with a diameter of 8 nm and a central density.

The protein resides in the cell inner membrane. Functionally, proton-dependent permease that transports di- and tripeptides as well as structurally related peptidomimetics such as aminocephalosporins into the cell. Has a clear preference for dipeptides and tripeptides composed of L-amino acids, and discriminates dipeptides on the basis of the position of charges within the substrate. This is Dipeptide and tripeptide permease A (dtpA) from Escherichia coli (strain K12).